We begin with the raw amino-acid sequence, 227 residues long: MGGCVGRERAETRGRGSRTQRKRGGRNEPLKKDKPKWKSDYPMTEGQLRSKRDEFWDTAPAFEGRKEIWDALKAAAVALECSDHELAQAIVDGANITLPHGSLTECYDELGNRYQLPVYCLAPPVNLISERSEEDLTDNPEPQTAQKKEFQLKVRLSTGKDLRLNASMSDTIGLLKKQLQAQEDIDISHQRWFFSGKLLTDKTRLQDTKIQKDFVIQVIVNQPAPNH.

Over residues 1–14 (MGGCVGRERAETRG) the composition is skewed to basic and acidic residues. Residues 1–45 (MGGCVGRERAETRGRGSRTQRKRGGRNEPLKKDKPKWKSDYPMTE) are disordered. Basic residues predominate over residues 15-24 (RGSRTQRKRG). The span at 25–39 (GRNEPLKKDKPKWKS) shows a compositional bias: basic and acidic residues. A Ubiquitin-like domain is found at 150–225 (FQLKVRLSTG…IQVIVNQPAP (76 aa)).

In terms of biological role, may be involved in the regulation of cellular senescence through a positive feedback loop with TP53. This is Ubiquitin domain-containing protein 1 (ubtd1) from Danio rerio (Zebrafish).